The chain runs to 323 residues: Protein translocase subunit SecF (323 aa).

6 consecutive transmembrane segments (helical) span residues 19-39 (GVIV…FKGF), 138-158 (ILSL…RYEW), 162-182 (LASV…VIVF), 189-209 (EVIA…IIIF), 244-264 (LTVF…IIGF), and 269-289 (LIGT…VALL).

It belongs to the SecD/SecF family. SecF subfamily. As to quaternary structure, forms a complex with SecD. Part of the essential Sec protein translocation apparatus which comprises SecA, SecYEG and auxiliary proteins SecDF-YajC and YidC.

The protein localises to the cell inner membrane. In terms of biological role, part of the Sec protein translocase complex. Interacts with the SecYEG preprotein conducting channel. SecDF uses the proton motive force (PMF) to complete protein translocation after the ATP-dependent function of SecA. In Helicobacter pylori (strain J99 / ATCC 700824) (Campylobacter pylori J99), this protein is Protein translocase subunit SecF.